The chain runs to 141 residues: MAKKVANVVKLQIPAGAATPAPPVGPALGQAGINIMGFTKEFNARTADQKGMLIPVVITVYEDRSFDFITKTPPAAVLLKKAAGVEHGSGEPNTNKVATVTKDQVKEIAETKMQDLNAADVEAAMRMIEGTARSMGFVVEG.

This sequence belongs to the universal ribosomal protein uL11 family. Part of the ribosomal stalk of the 50S ribosomal subunit. Interacts with L10 and the large rRNA to form the base of the stalk. L10 forms an elongated spine to which L12 dimers bind in a sequential fashion forming a multimeric L10(L12)X complex. Post-translationally, one or more lysine residues are methylated.

In terms of biological role, forms part of the ribosomal stalk which helps the ribosome interact with GTP-bound translation factors. This chain is Large ribosomal subunit protein uL11, found in Limosilactobacillus fermentum (strain NBRC 3956 / LMG 18251) (Lactobacillus fermentum).